The primary structure comprises 205 residues: Golgi apparatus membrane protein TVP23 homolog B (205 aa).

An N-acetylmethionine modification is found at Met1. Positions 1–21 (MLQQDSNDDTEDVSLFDAEEE) are disordered. Transmembrane regions (helical) follow at residues 34 to 53 (PVAS…VYLL), 54 to 72 (CELL…ILLL), 126 to 146 (IFWL…FSAL), and 152 to 172 (KWLA…YGYI).

It belongs to the TVP23 family.

The protein resides in the membrane. This chain is Golgi apparatus membrane protein TVP23 homolog B (TVP23B), found in Pongo abelii (Sumatran orangutan).